Consider the following 671-residue polypeptide: Archaeal Rqc2 homolog aRqcH (671 aa).

Coiled coils occupy residues 291–363 and 410–465; these read KVVV…ARIK and RKNA…MQMK.

Belongs to the NEMF family. As to quaternary structure, associates with stalled 50S ribosomal subunits.

In terms of biological role, probably part of the ribosome quality control system (RQC). May mediate the addition of alanine residues (Ala tailing) to incompletely synthesized nascent chains from stalled ribosomes, leading to their degradation. This is Archaeal Rqc2 homolog aRqcH from Methanocaldococcus jannaschii (strain ATCC 43067 / DSM 2661 / JAL-1 / JCM 10045 / NBRC 100440) (Methanococcus jannaschii).